The following is a 117-amino-acid chain: Glutamine-rich protein (117 aa).

A compositionally biased stretch (low complexity) spans 27–72; the sequence is RQQFQQQQQQQRQPQLQQQQQQQGIQQQPQGLQHQQQQFGLTQQHG. Residues 27 to 88 are disordered; sequence RQQFQQQQQQ…IVQPNPASQN (62 aa). Positions 75 to 87 are enriched in polar residues; that stretch reads RRQNIVQPNPASQ.

Component of the acid-soluble and acid-insoluble organic matrix of calcified shell layers (at protein level).

The protein localises to the secreted. This is Glutamine-rich protein from Haliotis asinina (Donkey's ear abalone).